We begin with the raw amino-acid sequence, 451 residues long: Multidrug export protein MepA (451 aa).

The next 12 membrane-spanning stretches (helical) occupy residues 26-46 (MIGT…IGFL), 54-74 (AISL…LFGV), 97-117 (SFSI…ALPF), 139-159 (LKVM…EQFA), 170-190 (IGML…IFGF), 194-214 (VVGA…FFII), 245-265 (IPAF…NLFL), 282-302 (LVQF…PLIA), 318-338 (AVIM…FTIG), 355-375 (ATFI…GFLF), 397-417 (VVII…GVIW), and 418-438 (SLLI…YLLR).

The protein belongs to the multi antimicrobial extrusion (MATE) (TC 2.A.66.1) family. MepA subfamily.

Its subcellular location is the cell membrane. Its function is as follows. Multidrug resistance efflux protein. The sequence is that of Multidrug export protein MepA (mepA) from Staphylococcus aureus (strain MRSA252).